The chain runs to 1091 residues: Leucine--tRNA ligase, cytoplasmic (1091 aa).

The short motif at 53–63 (PYMNGYLHIGH) is the 'HIGH' region element. A 'KMSKS' region motif is present at residues 715-719 (KMSKS). ATP is bound at residue lysine 718.

It belongs to the class-I aminoacyl-tRNA synthetase family.

Its subcellular location is the cytoplasm. The protein localises to the cytosol. It catalyses the reaction tRNA(Leu) + L-leucine + ATP = L-leucyl-tRNA(Leu) + AMP + diphosphate. Catalyzes the specific attachment of an amino acid to its cognate tRNA in a two step reaction: the amino acid (AA) is first activated by ATP to form AA-AMP and then transferred to the acceptor end of the tRNA. In Arabidopsis thaliana (Mouse-ear cress), this protein is Leucine--tRNA ligase, cytoplasmic.